A 439-amino-acid chain; its full sequence is Chitinase-like protein Idgf1 (439 aa).

An N-terminal signal peptide occupies residues 1–20; that stretch reads MRFQLCYLLGLLSVTSLSHA. Residues 22 to 439 form the GH18 domain; the sequence is SNLICYYDST…IVRSIKYFMG (418 aa). Cys26 and Cys53 are disulfide-bonded. N-linked (GlcNAc...) asparagine glycosylation is found at Asn122, Asn218, and Asn346. Cys340 and Cys423 are disulfide-bonded.

It belongs to the glycosyl hydrolase 18 family. IDGF subfamily. Post-translationally, glycosylated.

It localises to the secreted. In terms of biological role, cooperates with insulin-like peptides to stimulate the proliferation, polarization and motility of imaginal disk cells. May act by stabilizing the binding of insulin-like peptides to its receptor through a simultaneous interaction with both molecules to form a multiprotein signaling complex. This is Chitinase-like protein Idgf1 (Idgf1) from Drosophila yakuba (Fruit fly).